The chain runs to 91 residues: DNA-directed RNA polymerase subunit omega (91 aa).

The protein belongs to the RNA polymerase subunit omega family. The RNAP catalytic core consists of 2 alpha, 1 beta, 1 beta' and 1 omega subunit. When a sigma factor is associated with the core the holoenzyme is formed, which can initiate transcription.

The catalysed reaction is RNA(n) + a ribonucleoside 5'-triphosphate = RNA(n+1) + diphosphate. Promotes RNA polymerase assembly. Latches the N- and C-terminal regions of the beta' subunit thereby facilitating its interaction with the beta and alpha subunits. This chain is DNA-directed RNA polymerase subunit omega, found in Yersinia pestis bv. Antiqua (strain Antiqua).